Reading from the N-terminus, the 107-residue chain is Nucleoid-associated protein Pnec_0645 (107 aa).

It belongs to the YbaB/EbfC family. Homodimer.

The protein resides in the cytoplasm. The protein localises to the nucleoid. Functionally, binds to DNA and alters its conformation. May be involved in regulation of gene expression, nucleoid organization and DNA protection. In Polynucleobacter necessarius subsp. necessarius (strain STIR1), this protein is Nucleoid-associated protein Pnec_0645.